The chain runs to 401 residues: uncharacterized protein (401 aa).

This is an uncharacterized protein from Acanthamoeba polyphaga mimivirus (APMV).